Here is a 124-residue protein sequence, read N- to C-terminus: Peptidyl-tRNA hydrolase (124 aa).

The protein belongs to the PTH2 family.

The protein localises to the cytoplasm. The catalysed reaction is an N-acyl-L-alpha-aminoacyl-tRNA + H2O = an N-acyl-L-amino acid + a tRNA + H(+). In terms of biological role, the natural substrate for this enzyme may be peptidyl-tRNAs which drop off the ribosome during protein synthesis. The protein is Peptidyl-tRNA hydrolase of Aeropyrum pernix (strain ATCC 700893 / DSM 11879 / JCM 9820 / NBRC 100138 / K1).